We begin with the raw amino-acid sequence, 44 residues long: Capsid protein G8P (44 aa).

Topologically, residues 1 to 18 (MQSVITDVTGQLTAVQAD) are periplasmic. A helical transmembrane segment spans residues 19–39 (ITTIGGAIIVLAAVVLGIRWI). The Cytoplasmic portion of the chain corresponds to 40-44 (KAQFF).

This sequence belongs to the inovirus capsid protein family. In terms of assembly, homomultimerizes. There are several thousand copies of this protein in the phage capsid.

The protein resides in the virion. The protein localises to the host cell inner membrane. In terms of biological role, self assembles to form a helical capsid wrapping up the viral genomic DNA. The capsid displays a filamentous structure with a length of 760-1950 nm and a width of 6-8 nm. The virion assembly and budding take place at the host inner membrane. In Pseudomonas aeruginosa (Bacteriophage Pf3), this protein is Capsid protein G8P (VIII).